The chain runs to 176 residues: Disulfide bond formation protein B (176 aa).

Residues 1-14 (MLQFLNRCSRGRGA) lie on the Cytoplasmic side of the membrane. A helical transmembrane segment spans residues 15 to 31 (WLLMALTAFLLELTALY). The Periplasmic segment spans residues 32 to 49 (FQHIMLLQPCVMCIYERV). A disulfide bond links cysteine 41 and cysteine 44. Residues 50–65 (ALFGILGASLLGAIAP) traverse the membrane as a helical segment. The Cytoplasmic portion of the chain corresponds to 66–71 (RSPLRY). Residues 72–89 (LAIAVWIYSAWKGVQLAW) form a helical membrane-spanning segment. The Periplasmic segment spans residues 90 to 144 (AHTMLQLNPSPFNTCDFFVNFPSWLPLDKWLPAVFAASGDCSERQWQFMSLEMPQ). Residues cysteine 104 and cysteine 130 are joined by a disulfide bond. A helical membrane pass occupies residues 145 to 163 (WLVGIFAAYLVIAVLVLIS). Residues 164–176 (QFVKPKRRDLFGR) are Cytoplasmic-facing.

The protein belongs to the DsbB family.

The protein resides in the cell inner membrane. Its function is as follows. Required for disulfide bond formation in some periplasmic proteins. Acts by oxidizing the DsbA protein. This chain is Disulfide bond formation protein B, found in Yersinia pestis bv. Antiqua (strain Nepal516).